The following is a 251-amino-acid chain: 2,3-bisphosphoglycerate-dependent phosphoglycerate mutase (251 aa).

Residues 11-18 (RHGNSDWN), 24-25 (TG), Arg63, 90-93 (ERHY), Lys101, 117-118 (RR), and 185-186 (GN) each bind substrate. His12 acts as the Tele-phosphohistidine intermediate in catalysis. Glu90 serves as the catalytic Proton donor/acceptor. Positions 117-142 (RRSFDVPPPPIDDDDEYSQSRDPRYA) are disordered.

It belongs to the phosphoglycerate mutase family. BPG-dependent PGAM subfamily.

It carries out the reaction (2R)-2-phosphoglycerate = (2R)-3-phosphoglycerate. The protein operates within carbohydrate degradation; glycolysis; pyruvate from D-glyceraldehyde 3-phosphate: step 3/5. Its function is as follows. Catalyzes the interconversion of 2-phosphoglycerate and 3-phosphoglycerate. This Clavibacter michiganensis subsp. michiganensis (strain NCPPB 382) protein is 2,3-bisphosphoglycerate-dependent phosphoglycerate mutase.